Reading from the N-terminus, the 196-residue chain is Histone H1.0-B (196 aa).

Disordered regions lie at residues 1–29 (MAEN…PKYS) and 86–196 (GVGA…GRKK). One can recognise an H15 domain in the interval 24–97 (DHPKYSDMIL…GASGSFRLAK (74 aa)). Positions 104 to 196 (PAKKPKKEIK…ASPKKSGRKK (93 aa)) are enriched in basic residues.

Belongs to the histone H1/H5 family.

The protein localises to the nucleus. Its subcellular location is the chromosome. Its function is as follows. Histones H1 are necessary for the condensation of nucleosome chains into higher-order structures. The histones H1.0 are found in cells that are in terminal stages of differentiation or that have low rates of cell division. The sequence is that of Histone H1.0-B (h1-0-b) from Xenopus laevis (African clawed frog).